The chain runs to 282 residues: MKKLSVIFLSVSMLSGIAFADKDKVVATYKGGEVKESQIMKEFKPQLNLQSGETIKNFDDFPPQDQEKLIKIYVNNLLLKEEVAKSNITSSKEFQEKLENAKNQLAQQELLANYIKSNITDKMFDDEYNKYVGNLKGKEQIKVAHILVKSQKEANNIKTKLSKGGNFTKLAEESSLDKASASNGGVIGYILLNQPGQLVPEFEKKAFALKVNEVSTPVKTDFGWHIIKVLEKKPVPIPTKEEAKVTIDNILAAEVLKKYISDLEAKADLKIMLPKAGSKAGS.

The signal sequence occupies residues 1–20 (MKKLSVIFLSVSMLSGIAFA). The PpiC domain occupies 138–231 (KEQIKVAHIL…FGWHIIKVLE (94 aa)).

This sequence belongs to the PpiC/parvulin rotamase family.

It is found in the cell outer membrane. It catalyses the reaction [protein]-peptidylproline (omega=180) = [protein]-peptidylproline (omega=0). This is Parvulin-like PPIase (plp) from Rickettsia felis (strain ATCC VR-1525 / URRWXCal2) (Rickettsia azadi).